The sequence spans 356 residues: Heme A synthase (356 aa).

Transmembrane regions (helical) follow at residues I23–V43, F105–L125, I141–V161, A173–L193, and S212–I232. Heme is bound at residue H274. The next 3 helical transmembrane spans lie at L276–P296, L307–V327, and L329–V349. Position 335 (H335) interacts with heme.

The protein belongs to the COX15/CtaA family. Type 2 subfamily. Interacts with CtaB. Requires heme b as cofactor.

The protein resides in the cell membrane. The enzyme catalyses Fe(II)-heme o + 2 A + H2O = Fe(II)-heme a + 2 AH2. The protein operates within porphyrin-containing compound metabolism; heme A biosynthesis; heme A from heme O: step 1/1. Catalyzes the conversion of heme O to heme A by two successive hydroxylations of the methyl group at C8. The first hydroxylation forms heme I, the second hydroxylation results in an unstable dihydroxymethyl group, which spontaneously dehydrates, resulting in the formyl group of heme A. The sequence is that of Heme A synthase from Nitrosospira multiformis (strain ATCC 25196 / NCIMB 11849 / C 71).